The primary structure comprises 387 residues: Zinc finger transcription factor YY1 (387 aa).

5 consecutive C2H2-type zinc fingers follow at residues 79-103, 108-132, 138-162, 168-193, and 230-255; these read FLCS…SHIH, YVCD…YLIH, YICT…MKTH, HICP…AAYH, and YACP…KREH. Residues 201–290 are MED18-binding; the sequence is TPKYTPPAEK…DDGSDQDVYR (90 aa). The disordered stretch occupies residues 258–387; it reads HLQEENADTP…DDDEETEYED (130 aa). S284 is subject to Phosphoserine. A compositionally biased stretch (basic residues) spans 291-305; sequence KHASNGKGQTHKQQS. The short motif at 319-326 is the Nuclear localization signal element; that stretch reads GKKGSTSS. A coiled-coil region spans residues 339–367; it reads AKETFEEVEREEEEDSEETEEDRDNVEDG. 2 stretches are compositionally biased toward acidic residues: residues 344 to 363 and 373 to 387; these read EEVE…DRDN and NNED…EYED.

In terms of assembly, interacts with MED18 to suppress disease susceptibility via the repression of genes glutaredoxins GRX480, GRXS13 and thioredoxin TRX-h5. As to expression, mostly expressed in flowers, to a lower extent in seedlings, stems and leaves, and, at low levels, in roots and senescent leaves.

It is found in the nucleus. Dual-function transcription factor with both repression and activation activities. Binds to 5'-CCATATT-3' motif in target gene promoters (e.g. ABR1). Also binds to G-rich DNA motif 5'-GGGGGCAGTGG-3'. Regulates the expression of genes involved in diverse cellular pathways, including glucose metabolism, photosynthesis, phototropism and stress response (e.g. salt, drought and osmotic stress). Regulates plant immunity, especially during necrotrophic fungal infection (e.g. B.cinerea). Binds to ABR1 promoter and promotes its expression, thus negatively regulating the abscisic acid (ABA) signaling pathway. Represses ABA- and salt-responsive genes expression. This chain is Zinc finger transcription factor YY1, found in Arabidopsis thaliana (Mouse-ear cress).